A 318-amino-acid chain; its full sequence is 2-keto-3-deoxygluconate permease (318 aa).

The next 10 helical transmembrane spans lie at 10-30 (IPGG…TFTP), 42-62 (GLIT…GASI), 76-96 (VLVI…GTFL), 105-125 (LLAG…NGGL), 139-159 (AGAF…VILG), 162-182 (GIAT…LIGF), 199-219 (VQTL…LAVI), 224-244 (FAGI…LIIA), 263-283 (AGAA…FAPV), and 289-309 (ALVA…TALW).

It belongs to the KdgT transporter family.

It localises to the cell inner membrane. It carries out the reaction 2-dehydro-3-deoxy-D-gluconate(in) + H(+)(in) = 2-dehydro-3-deoxy-D-gluconate(out) + H(+)(out). Its function is as follows. Catalyzes the proton-dependent uptake of 2-keto-3-deoxygluconate (KDG) into the cell. This chain is 2-keto-3-deoxygluconate permease, found in Pectobacterium carotovorum subsp. carotovorum (strain PC1).